The chain runs to 197 residues: Protein GrpE (197 aa).

Residues 1-12 (MTDSDGKTDKSG) are compositionally biased toward basic and acidic residues. The disordered stretch occupies residues 1-35 (MTDSDGKTDKSGEPAAEVEPVVSKPYVMPDDPEDD).

It belongs to the GrpE family. Homodimer.

It localises to the cytoplasm. Its function is as follows. Participates actively in the response to hyperosmotic and heat shock by preventing the aggregation of stress-denatured proteins, in association with DnaK and GrpE. It is the nucleotide exchange factor for DnaK and may function as a thermosensor. Unfolded proteins bind initially to DnaJ; upon interaction with the DnaJ-bound protein, DnaK hydrolyzes its bound ATP, resulting in the formation of a stable complex. GrpE releases ADP from DnaK; ATP binding to DnaK triggers the release of the substrate protein, thus completing the reaction cycle. Several rounds of ATP-dependent interactions between DnaJ, DnaK and GrpE are required for fully efficient folding. The chain is Protein GrpE from Nitrobacter winogradskyi (strain ATCC 25391 / DSM 10237 / CIP 104748 / NCIMB 11846 / Nb-255).